A 91-amino-acid chain; its full sequence is Mercuric transport protein periplasmic component (91 aa).

The signal sequence occupies residues 1–19 (MKKLLSALALAAVVAPVWA). Residues 22-88 (QTVTLSVPGM…ATEDAGYPSS (67 aa)) form the HMA domain. Hg(2+)-binding residues include Cys-33 and Cys-36.

The protein belongs to the MerP family. Monomer.

It is found in the periplasm. Its function is as follows. Involved in mercury resistance. Acts as a mercury scavenger that specifically binds to a mercuric ion in the periplasm and probably passes it to the cytoplasmic mercuric reductase MerA via the mercuric transport protein MerT. The chain is Mercuric transport protein periplasmic component from Pseudomonas fluorescens.